The sequence spans 212 residues: Ras-related protein Rab-2A (212 aa).

At Ala-2 the chain carries N-acetylalanine. The required for interaction with PRKCI stretch occupies residues 2 to 19 (AYAYLFKYIIIGDTGVGK). The GTP site is built by Gly-16, Val-17, Gly-18, Lys-19, Ser-20, Cys-21, and Thr-38. Ser-20 contacts Mg(2+). Positions 37 to 42 (LTMGVE) match the Switch 1 motif. Mg(2+)-binding residues include Thr-38 and Asp-61. Residues 63 to 72 (AGQESFRSIT) carry the Switch 2 motif. Positions 64, 119, 120, 122, 150, and 151 each coordinate GTP. The interval 190–212 (QHAATNASHGGNQGGQQAGGGCC) is disordered. Over residues 200–212 (GNQGGQQAGGGCC) the composition is skewed to gly residues. 2 S-geranylgeranyl cysteine lipidation sites follow: Cys-211 and Cys-212.

It belongs to the small GTPase superfamily. Rab family. Interacts with PRKCI. Interacts with TRIP11. Interacts (in GTP-bound form) with GARIN1B. Interacts (GTP-bound) with HOPS complex component VPS39; interaction contributes to obtaining a functional HOPS complex that promotes autophagosome-lysosome membrane fusion driven by STX17-SNAP29-VAMP8. May interact with VPS41. Mg(2+) is required as a cofactor. Prenylated. Prenylation is required for association with cellular membranes.

It localises to the endoplasmic reticulum-Golgi intermediate compartment membrane. The protein localises to the melanosome. The protein resides in the endoplasmic reticulum membrane. Its subcellular location is the golgi apparatus membrane. It is found in the cytoplasmic vesicle. It localises to the secretory vesicle. The protein localises to the acrosome. The protein resides in the autophagosome membrane. The enzyme catalyses GTP + H2O = GDP + phosphate + H(+). Regulated by guanine nucleotide exchange factors (GEFs) which promote the exchange of bound GDP for free GTP, GTPase activating proteins (GAPs) which increase the GTP hydrolysis activity, and GDP dissociation inhibitors (GDIs) which inhibit the dissociation of the nucleotide from the GTPase. The small GTPases Rab are key regulators of intracellular membrane trafficking, from the formation of transport vesicles to their fusion with membranes. Rabs cycle between active GTP-bound and inactive GDP-bound states. In their active state, drive transport of vesicular carriers from donor organelles to acceptor organelles to regulate the membrane traffic that maintains organelle identity and morphology. RAB2A regulates autophagy by promoting autophagosome-lysosome fusion via recruitment of the HOPS endosomal tethering complex; this process involves autophagosomal RAB2A and lysosomal RAB39A recruitment of HOPS subcomplexes VPS39-VPS11 and VPS41-VPS16-VPS18-VPS33A, respectively, which assemble into a functional complex to mediate membrane tethering and SNAREs-driven membrane fusion. Required for protein transport from the endoplasmic reticulum to the Golgi complex. Regulates the compacted morphology of the Golgi. Together with RAB2B, redundantly required for efficient autophagic flux. This is Ras-related protein Rab-2A (Rab2a) from Rattus norvegicus (Rat).